A 307-amino-acid chain; its full sequence is Sesquiterpene synthase-like protein Agr10 (307 aa).

Residues 287 to 307 are disordered; it reads GRYFGDRGPENQSDIPTSSNR. Residues 296–307 are compositionally biased toward polar residues; the sequence is ENQSDIPTSSNR.

Belongs to the terpene synthase family.

The chain is Sesquiterpene synthase-like protein Agr10 from Cyclocybe aegerita (Black poplar mushroom).